A 430-amino-acid chain; its full sequence is Histidine--tRNA ligase (430 aa).

It belongs to the class-II aminoacyl-tRNA synthetase family. In terms of assembly, homodimer.

It is found in the cytoplasm. The enzyme catalyses tRNA(His) + L-histidine + ATP = L-histidyl-tRNA(His) + AMP + diphosphate + H(+). This is Histidine--tRNA ligase from Synechococcus sp. (strain CC9902).